A 484-amino-acid polypeptide reads, in one-letter code: ATP synthase subunit beta (484 aa).

Residue 169–176 (GGAGVGKT) participates in ATP binding.

This sequence belongs to the ATPase alpha/beta chains family. F-type ATPases have 2 components, CF(1) - the catalytic core - and CF(0) - the membrane proton channel. CF(1) has five subunits: alpha(3), beta(3), gamma(1), delta(1), epsilon(1). CF(0) has three main subunits: a(1), b(2) and c(9-12). The alpha and beta chains form an alternating ring which encloses part of the gamma chain. CF(1) is attached to CF(0) by a central stalk formed by the gamma and epsilon chains, while a peripheral stalk is formed by the delta and b chains.

Its subcellular location is the cell membrane. It catalyses the reaction ATP + H2O + 4 H(+)(in) = ADP + phosphate + 5 H(+)(out). Produces ATP from ADP in the presence of a proton gradient across the membrane. The catalytic sites are hosted primarily by the beta subunits. The chain is ATP synthase subunit beta from Nocardioides sp. (strain ATCC BAA-499 / JS614).